Consider the following 209-residue polypeptide: FMN-dependent NADH:quinone oxidoreductase (209 aa).

Residues Ser-9, 19 to 21 (SVS), and 143 to 146 (TRGG) contribute to the FMN site.

Belongs to the azoreductase type 1 family. In terms of assembly, homodimer. FMN serves as cofactor.

It catalyses the reaction 2 a quinone + NADH + H(+) = 2 a 1,4-benzosemiquinone + NAD(+). It carries out the reaction N,N-dimethyl-1,4-phenylenediamine + anthranilate + 2 NAD(+) = 2-(4-dimethylaminophenyl)diazenylbenzoate + 2 NADH + 2 H(+). Its function is as follows. Quinone reductase that provides resistance to thiol-specific stress caused by electrophilic quinones. In terms of biological role, also exhibits azoreductase activity. Catalyzes the reductive cleavage of the azo bond in aromatic azo compounds to the corresponding amines. The chain is FMN-dependent NADH:quinone oxidoreductase from Leptothrix cholodnii (strain ATCC 51168 / LMG 8142 / SP-6) (Leptothrix discophora (strain SP-6)).